A 38-amino-acid chain; its full sequence is Putative defensin-like protein 105 (38 aa).

3 cysteine pairs are disulfide-bonded: Cys5-Cys27, Cys13-Cys33, and Cys17-Cys34.

The protein belongs to the DEFL family.

The sequence is that of Putative defensin-like protein 105 from Arabidopsis thaliana (Mouse-ear cress).